The chain runs to 2249 residues: Endoribonuclease Dcr-1 (2249 aa).

Residues 1-371 (MAFHWCDNNL…SPKVRRLLQT (371 aa)) are essential for miRNA substrate recognition. The segment at 1 to 690 (MAFHWCDNNL…SKQPPTACDI (690 aa)) is important for interaction with loqs isoform PB (loqs-PB). The segment at 1–761 (MAFHWCDNNL…AEIDTAHSLA (761 aa)) is helicase domain. Residues 1–1042 (MAFHWCDNNL…VSLELAKERV (1042 aa)) are necessary for processing certain pre-miRNas, such as pre-let 7 and pre-bantam. 37-44 (LGHRSSKE) is a binding site for ATP. Residues 371 to 491 (TLRCFKPEEV…HHRDHNDGSD (121 aa)) are dispensable for activity and substrate recognition. Positions 436-486 (TTEDRQTNRSAARVTPTPTPAHAKPKPSSGANTAQPRTRRRVYTRRHHRDH) are disordered. The segment covering 472–484 (RTRRRVYTRRHHR) has biased composition (basic residues). Positions 485 to 648 (DHNDGSDTLC…TGDTTEADSD (164 aa)) constitute a Helicase C-terminal domain. Residues 496-606 (LIYCNQNHTA…VQCKGRARAA (111 aa)) form an essential for miRNA substrate recognition region. Positions 617–761 (SYKSPTVGSV…AEIDTAHSLA (145 aa)) are dispensable for activity and substrate recognition. Disordered stretches follow at residues 640–665 (GDTTEADSDSDDSAMPNSSGSDPYTF) and 705–757 (LDTS…IDTA). The segment covering 716 to 726 (SMSNTSPSESS) has biased composition (low complexity). One can recognise a Dicer dsRNA-binding fold domain in the interval 825–920 (AIALVNKYCA…QPIGKEGFRA (96 aa)). Positions 924 to 957 (DWECFELEPEDEQIVQLSDEPRPGTTKRRQYYYK) are wing domain. The tract at residues 963–1108 (FCDCRPVAGA…WQFLELIQAN (146 aa)) is platform domain. The region spanning 1100–1246 (QFLELIQANG…LVPELCTVHP (147 aa)) is the PAZ domain. The segment at 1147–2249 (QYFYVAEICP…KKQGLIAKKD (1103 aa)) is essential for production of mature miRNAs from pre-miRNAs. Also important for proper formation of the siRISC complex but is dispensable for biogenesis of siRNAs. The segment at 1314 to 1351 (ESKQKESLKDDTINGKDLADVEKKPTSEETQLDKDSKD) is disordered. Residue Ser-1423 is modified to Phosphoserine. The segment at 1426-1477 (FWDVSNGESGFKGPKSSQNKQGGKGKAKGPAKPTFNYYDSDNSLGSSYDDDD) is disordered. Over residues 1437–1446 (KGPKSSQNKQ) the composition is skewed to low complexity. Polar residues predominate over residues 1462–1471 (YYDSDNSLGS). 2 RNase III domains span residues 1698–1919 (ITSA…IECG) and 1993–2150 (FEEF…LDSN). Mg(2+)-binding residues include Glu-1745 and Asp-1749. Residues Ser-1877 and Ser-1880 each carry the phosphoserine modification. 5 residues coordinate Mg(2+): Asp-1905, Glu-1908, Glu-2032, Asp-2136, and Glu-2139. The DRBM domain occupies 2175–2241 (VPKSPIRELL…AKCALRQLKK (67 aa)).

It belongs to the helicase family. Dicer subfamily. As to quaternary structure, component of the miRNA-directed RISC loading complex (miRLC), composed of at least Dcr-1, AGO1 and loqs, which processes pre-miRNAs and loads the resulting miRNAs into the Argonaute 1 (AGO1)-containing RNA-induced silencing complex (miRISC). Interacts (via helicase domain) with dicing cofactor loqs isoform-PB (loqs-PB) (via DRBM 3 domain); this interaction enhances processing of pre-miRNAs by increasing substrate binding affinity of the dicer. Also able to interact with loqs isoforms PA and PC, however the relevance of such interactions are unclear in vivo. Different regions of the Dcr-1-loqs-PB heterodimer collaborate to recognize, bind and position the pre-miRNA for Dcr-1 mediated cleavage. In the absence of authentic miRNA substrates, the heterodimer favors a closed, catalytically incompetent, conformation, whereas binding of authentic pre-miRNA substrates stabilizes the relatively rare open, catalytically competent, conformation of the heterodimer. During substrate recognition, the Dcr-1 PAZ domain and pre-miRNA interact with the DRBM 1 domain of loqs-PB, which likely contributes to substrate recognition and stabilization. At the miRNA binding stage, the Dcr-1 DRBM domain and loqs-PB DRBM domains then bind the pre-miRNA in tandem to form a tight 'belt' around the pre-miRNA stem, the pre-miRNA loop is docked in the loop-binding region formed by DUF283, DRBM and part of the N terminus of Dcr-1, and the loqs-PB DRBM 1 and the wing domain of Dcr-1 act together to bind the 5' and 3' pre-miRNA termini within the PAZ and platform domains of Dcr-1. These interactions between the proteins and their pre-miRNA substrate stabilize a distorted form of the pre-miRNA and position the scissile phosphodiester bonds of the pre-miRNA at the RNase III catalytic cleavage sites of Dcr-1. Following Dcr-1 mediated cleavage, the miRNA duplex remains bound to loqs-PB DRBM 1, which dissociates from the Dcr-1 RNase III 1 domain but remains in contact with the PAZ and wing domains, suggesting that the heterodimer presents the mature miRNA to Ago2 for loading into the RNA-induced silencing complex (miRISC). Interacts with AGO2 and Fmr1 to form a RNA-induced silencing complex (siRISC), a ribonucleoprotein (RNP) complex involved in translation regulation; other components of the complex are RpL5, RpL11, AGO2 and Rm62. Interacts with piwi and vas; these interactions occur in the polar granules. It depends on Mg(2+) as a cofactor. Mn(2+) serves as cofactor.

It localises to the cytoplasm. Its subcellular location is the cytosol. The catalysed reaction is Endonucleolytic cleavage to 5'-phosphomonoester.. Its activity is regulated as follows. Activity towards pre-miRNAs is not inhibited by inorganic phosphate. Endoribonuclease which functions in microRNA- (miRNA) gene silencing and, independently of its ribonuclease III activity, also acts in the short interfering RNA- (siRNA) gene silencing pathway. Cleaves hairpin precursor miRNAs (pre-miRNA) to generate mature miRNAs (miRNAs) that are between twenty-one to twenty-four nucleotides in length and function in RNA silencing and post-transcriptional regulation of gene expression. Also functions in miRNA loading and assembly of the Argonaute 1 (AGO1)-containing RNA-induced silencing complex (miRISC), with the miRNAs serving as a guide to direct the miRISC to complementary RNAs to degrade them or prevent their translation. Independently of its catalytic activity, functions in the siRNA silencing pathway by promoting assembly of the siRNA-directed Argonaute 2 (AGO2)-containing RISC (siRISC). Required for the proper formation of a stable intermediate (R2) in siRISC assembly, which is formed from the R1 precursor complex (containing Dcr-2, R2D2 and the siRNA) and is used for assembly of the mature (R3) siRISC complex. It is not required for siRNA biogenesis. During embryogenesis, involved in germline fate determination. Post-transcriptionally regulates mei-P26 expression through the microRNA pathway, which in turn post-translationally regulates myc protein levels; involved in regulating cell and tissue growth. The protein is Endoribonuclease Dcr-1 of Drosophila melanogaster (Fruit fly).